Here is a 330-residue protein sequence, read N- to C-terminus: L-asparaginase (330 aa).

Positions 4–330 (PQVTILATGG…EAIQKIFSTY (327 aa)) constitute an Asparaginase/glutaminase domain. The active-site O-isoaspartyl threonine intermediate is threonine 14. A substrate-binding site is contributed by 93-94 (TD).

This sequence belongs to the asparaginase 1 family. In terms of assembly, homotetramer.

Its subcellular location is the cytoplasm. It catalyses the reaction L-asparagine + H2O = L-aspartate + NH4(+). The protein is L-asparaginase (ansA) of Wolinella succinogenes (strain ATCC 29543 / DSM 1740 / CCUG 13145 / JCM 31913 / LMG 7466 / NCTC 11488 / FDC 602W) (Vibrio succinogenes).